We begin with the raw amino-acid sequence, 241 residues long: Uridylate kinase (241 aa).

15–18 lines the ATP pocket; the sequence is KLSG. The involved in allosteric activation by GTP stretch occupies residues 23 to 28; the sequence is GAEGFG. UMP is bound at residue glycine 57. Positions 58 and 62 each coordinate ATP. UMP contacts are provided by residues aspartate 77 and 138–145; that span reads TGNPFFTT. 3 residues coordinate ATP: threonine 165, phenylalanine 171, and aspartate 174.

It belongs to the UMP kinase family. As to quaternary structure, homohexamer.

It is found in the cytoplasm. It carries out the reaction UMP + ATP = UDP + ADP. It functions in the pathway pyrimidine metabolism; CTP biosynthesis via de novo pathway; UDP from UMP (UMPK route): step 1/1. Allosterically activated by GTP. Inhibited by UTP. Functionally, catalyzes the reversible phosphorylation of UMP to UDP. The chain is Uridylate kinase from Sodalis glossinidius (strain morsitans).